The chain runs to 458 residues: ATP synthase subunit beta (458 aa).

Gly148 to Thr155 contacts ATP.

This sequence belongs to the ATPase alpha/beta chains family. In terms of assembly, F-type ATPases have 2 components, CF(1) - the catalytic core - and CF(0) - the membrane proton channel. CF(1) has five subunits: alpha(3), beta(3), gamma(1), delta(1), epsilon(1). CF(0) has three main subunits: a(1), b(2) and c(9-12). The alpha and beta chains form an alternating ring which encloses part of the gamma chain. CF(1) is attached to CF(0) by a central stalk formed by the gamma and epsilon chains, while a peripheral stalk is formed by the delta and b chains.

It localises to the cell inner membrane. It carries out the reaction ATP + H2O + 4 H(+)(in) = ADP + phosphate + 5 H(+)(out). In terms of biological role, produces ATP from ADP in the presence of a proton gradient across the membrane. The catalytic sites are hosted primarily by the beta subunits. The protein is ATP synthase subunit beta of Alkalilimnicola ehrlichii (strain ATCC BAA-1101 / DSM 17681 / MLHE-1).